Reading from the N-terminus, the 450-residue chain is Nicotinamide phosphoribosyltransferase (450 aa).

A diphosphate-binding site is contributed by Arg210. Asp233 provides a ligand contact to beta-nicotinamide D-ribonucleotide. The diphosphate site is built by His249 and Arg310. Residues 310–312 (RAD), 364–365 (GD), and Arg403 contribute to the beta-nicotinamide D-ribonucleotide site.

This sequence belongs to the NAPRTase family.

It catalyses the reaction beta-nicotinamide D-ribonucleotide + diphosphate = 5-phospho-alpha-D-ribose 1-diphosphate + nicotinamide + H(+). It functions in the pathway cofactor biosynthesis; NAD(+) biosynthesis; nicotinamide D-ribonucleotide from 5-phospho-alpha-D-ribose 1-diphosphate and nicotinamide: step 1/1. Functionally, catalyzes the condensation of nicotinamide with 5-phosphoribosyl-1-pyrophosphate to yield nicotinamide mononucleotide, an intermediate in the biosynthesis of NAD. This Mycoplasma genitalium (strain ATCC 33530 / DSM 19775 / NCTC 10195 / G37) (Mycoplasmoides genitalium) protein is Nicotinamide phosphoribosyltransferase.